The sequence spans 276 residues: MVVKIGIVKVGNIGTSVLIDMILDERADREDIDVRTISSGAKMGKNQMDDVLPKIDEYNPDVIIFISPDPGAKSPSSARETLSKKNIPTIVIGDGPGERAIGSMKEQGLGYIIVKADSMIGARREFLDATEMAVFNSDVLMVLSTTGVFRLIHKTLDKVIRDIDEDKLYSLPELVITAENAVDAADFKNPYAKSKAIAAYSIACQVSSMNVRACFKTKDYHVYIPLVSAAHEMMSAASKLAYEAREIEKSNDTVVRTAHRRNGSILYGTSLNDNKE.

Belongs to the MTD family.

It catalyses the reaction 5,10-methylenetetrahydromethanopterin + oxidized coenzyme F420-(gamma-L-Glu)(n) + 2 H(+) = 5,10-methenyl-5,6,7,8-tetrahydromethanopterin + reduced coenzyme F420-(gamma-L-Glu)(n). Catalyzes the oxidation of methylene-H(4)MPT to methenyl-H(4)MPT(+). The polypeptide is F420-dependent methylenetetrahydromethanopterin dehydrogenase (Methanosphaera stadtmanae (strain ATCC 43021 / DSM 3091 / JCM 11832 / MCB-3)).